The primary structure comprises 174 residues: Peptide methionine sulfoxide reductase MsrA (174 aa).

Cys10 is an active-site residue.

It belongs to the MsrA Met sulfoxide reductase family.

It catalyses the reaction L-methionyl-[protein] + [thioredoxin]-disulfide + H2O = L-methionyl-(S)-S-oxide-[protein] + [thioredoxin]-dithiol. The enzyme catalyses [thioredoxin]-disulfide + L-methionine + H2O = L-methionine (S)-S-oxide + [thioredoxin]-dithiol. Its function is as follows. Has an important function as a repair enzyme for proteins that have been inactivated by oxidation. Catalyzes the reversible oxidation-reduction of methionine sulfoxide in proteins to methionine. The sequence is that of Peptide methionine sulfoxide reductase MsrA from Arthrobacter sp. (strain FB24).